The sequence spans 457 residues: Chromosomal replication initiator protein DnaA (457 aa).

A domain I, interacts with DnaA modulators region spans residues 1-75 (MDAQLNNLWE…ALKIVTSRKF (75 aa)). The interval 75 to 118 (FKIEFYLESDLEEEKENEEKQKEEKKENTNDVDGSIVVSDEMSA) is domain II. A domain III, AAA+ region region spans residues 119–335 (TLNPKYTFQS…GALIRIIAYS (217 aa)). Residues Gly163, Gly165, Lys166, and Thr167 each contribute to the ATP site. Residues 336–457 (SLTNRDVSVD…NDITKKLTQK (122 aa)) form a domain IV, binds dsDNA region.

Belongs to the DnaA family. In terms of assembly, oligomerizes as a right-handed, spiral filament on DNA at oriC.

The protein localises to the cytoplasm. Its function is as follows. Plays an essential role in the initiation and regulation of chromosomal replication. ATP-DnaA binds to the origin of replication (oriC) to initiate formation of the DNA replication initiation complex once per cell cycle. Binds the DnaA box (a 9 base pair repeat at the origin) and separates the double-stranded (ds)DNA. Forms a right-handed helical filament on oriC DNA; dsDNA binds to the exterior of the filament while single-stranded (ss)DNA is stabiized in the filament's interior. The ATP-DnaA-oriC complex binds and stabilizes one strand of the AT-rich DNA unwinding element (DUE), permitting loading of DNA polymerase. After initiation quickly degrades to an ADP-DnaA complex that is not apt for DNA replication. Binds acidic phospholipids. The sequence is that of Chromosomal replication initiator protein DnaA from Clostridium perfringens (strain ATCC 13124 / DSM 756 / JCM 1290 / NCIMB 6125 / NCTC 8237 / Type A).